We begin with the raw amino-acid sequence, 399 residues long: MAQRAFPNPYADYNKSLAENYFDSTGRLTPEFSHRLTNKIRELLQQMERGLKSADPRDGTGYTGWAGIAVLYLHLHNVFGDPAYLQMAHSYVKQSLNCLSRRSITFLCGDAGPLAVAAVLYHKMNSEKQAEECITRLIHLNKIDPHVPNEMLYGRIGYIFALLFVNKNFGEEKIPQSHIQQICENILTSGENLSRKRNLAAKSPLMYEWYQEYYVGAAHGLAGIYYYLMQPSLQVNQGKLHSLVKPSVDFVCRLKFPSGNYPPCLDDTRDLLVHWCHGAPGVIYMLIQAYKVFKEERYLCDAQQCADVIWQYGLLKKGYGLCHGAAGNAYAFLALYNLTQDLKYLYRACKFAEWCLDYGEHGCRTADTPFSLFEGMAGTIYFLADLLVPTKAKFPAFEL.

Residue Ala-2 is modified to N-acetylalanine. The residue at position 142 (Lys-142) is an N6-acetyllysine. Cys-276 lines the Zn(2+) pocket. Lys-317 serves as a coordination point for glutathione. Zn(2+) is bound by residues Cys-322 and His-323. 364-367 (RTAD) serves as a coordination point for glutathione.

The protein belongs to the LanC-like protein family. As to quaternary structure, interacts with the C-terminal of STOM. Interacts with the EPS8 SH3 domain. Interaction with EPS8 is inhibited by glutathione binding. Detected in spinal cord (at protein level). Ubiquitous. Strongly expressed in brain, testis, alveolar macrophages and epithelial cells of the lung, kidney and intestine. Expression in brain increases during the first postnatal month and remaining high in adult.

The protein localises to the cytoplasm. It is found in the cell membrane. It catalyses the reaction RX + glutathione = an S-substituted glutathione + a halide anion + H(+). It carries out the reaction 1-chloro-2,4-dinitrobenzene + glutathione = 2,4-dinitrophenyl-S-glutathione + chloride + H(+). In terms of biological role, functions as a glutathione transferase. Catalyzes conjugation of the glutathione (GSH) to artificial substrates 1-chloro-2,4-dinitrobenzene (CDNB) and p-nitrophenyl acetate. Mitigates neuronal oxidative stress during normal postnatal development and in response to oxidative stresses probably through GSH antioxidant defense mechanism. May play a role in EPS8 signaling. Binds glutathione. The sequence is that of Glutathione S-transferase LANCL1 from Mus musculus (Mouse).